A 227-amino-acid chain; its full sequence is MTQSTHDGHAAHSLHGGVYPGNLFMVVAPSGAGKSTLVNALLSKDSDICLSISYTTRKPRPGEQDGQHYHFTTVEDFRTRHAAHEFLESAEVHGNYYGTSRVWIEEQMKNGHDVLLEIDWQGALQVKKQFRNAVGIFILPPSLDALEERLKKRGQDEPKVITRRLLAAGSEIAHAPEAEYVVINENFERALAELECIVAATRLRFASQYARHTELFIELGIHLPHAE.

The Guanylate kinase-like domain maps to 21 to 199 (GNLFMVVAPS…ALAELECIVA (179 aa)). 28–35 (APSGAGKS) serves as a coordination point for ATP.

The protein belongs to the guanylate kinase family.

The protein localises to the cytoplasm. It catalyses the reaction GMP + ATP = GDP + ADP. Functionally, essential for recycling GMP and indirectly, cGMP. This chain is Guanylate kinase, found in Burkholderia lata (strain ATCC 17760 / DSM 23089 / LMG 22485 / NCIMB 9086 / R18194 / 383).